The following is a 324-amino-acid chain: Aldo-keto reductase family 1 member C15 (324 aa).

NADP(+) contacts are provided by residues 24–26 (TFA) and Asp-51. Tyr-56 serves as the catalytic Proton donor. His-118 contributes to the substrate binding site. NADP(+) is bound by residues 167–168 (SN), Gln-191, 217–225 (YSALGSHRD), and 269–281 (LAKS…IKEN).

It belongs to the aldo/keto reductase family. In terms of assembly, monomer. As to expression, expressed in lung, specifically in bronchiolar club cells, type II alveolar cells and epithelial cells of the duct of the bronchial gland (at protein level). Expressed in gastric parietal cells and in epithelial cells of the large intestine and colon (at protein level). Expressed in brown adipocytes (at protein level). Expressed in vascular endothelial cells (at protein level).

Its subcellular location is the cytoplasm. The catalysed reaction is (2E,6E)-farnesol + NADP(+) = (2E,6E)-farnesal + NADPH + H(+). The dehydrogenase activity is inhibited by 3',3'',5',5''-tetraiodophenolphthalein, phenolphthalein, genistein, quercetin, zearalenone and diethylstilbestrol. Catalyzes the NADPH-dependent reduction of a variety of substrates including aromatic and aliphatic aldehydes, quinones, ketones, dicarbonyl compounds and 17-ketosteroids. Catalyzes the NADP(+)-dependent oxidation of aromatic, alicyclic and aliphatic alcohols, and 17beta-hydroxysteroids. To a lesser extent, can also catalyze the reduction of some aldoses and ketoses and the oxidation of some sugar alcohols. In the stomach, lung and colon tissues, mediates the reduction of farnesal and geranylgeranial into farnesol and geranylgeraniol respectively. By reducing 4-hydroxy-2-nonenal (HNE), produced during lipid peroxidation, into 1,4-dihydro-2-nonene (DHN), protects vascular endothelial cells from damage elicited by oxidized lipoproteins. The chain is Aldo-keto reductase family 1 member C15 from Rattus norvegicus (Rat).